Reading from the N-terminus, the 612-residue chain is Phragmoplastin DRP1D (612 aa).

Residue Met-1 is modified to N-acetylmethionine. The Dynamin-type G domain occupies 32–301 (WEALPSVAVV…LESVIRSRIP (270 aa)). A G1 motif region spans residues 42–49 (GGQSSGKS). 45–50 (SSGKSS) serves as a coordination point for GTP. Residues 68-70 (VTR) are G2 motif. A G3 motif region spans residues 143–146 (DLPG). Residues 212 to 215 (TKLD) are G4 motif. Residues 213–218 (KLDLMD) and 243–246 (NRSQ) contribute to the GTP site. The interval 242–245 (VNRS) is G5 motif. Positions 520–612 (FRKIASNVAA…DEIDAAVWVR (93 aa)) constitute a GED domain.

This sequence belongs to the TRAFAC class dynamin-like GTPase superfamily. Dynamin/Fzo/YdjA family. Forms homodimer and may homooligomerize and heterooligomerize to form the phragmoplastin complex. Binds to PHIP1.

It localises to the cytoplasm. The protein localises to the cytoskeleton. It carries out the reaction GTP + H2O = GDP + phosphate + H(+). Functionally, putative microtubule-associated force-producing protein. Has a GTPase activity. This chain is Phragmoplastin DRP1D, found in Arabidopsis thaliana (Mouse-ear cress).